The primary structure comprises 358 residues: 3-isopropylmalate dehydrogenase (358 aa).

Position 77–90 (77–90 (GPKWTHLPPDQQPE)) interacts with NAD(+). Arginine 98, arginine 108, arginine 137, and aspartate 226 together coordinate substrate. The Mg(2+) site is built by aspartate 226, aspartate 250, and aspartate 254. NAD(+) is bound at residue 284–296 (GSAPDIAGKGIAN).

This sequence belongs to the isocitrate and isopropylmalate dehydrogenases family. LeuB type 1 subfamily. In terms of assembly, homodimer. Mg(2+) serves as cofactor. Requires Mn(2+) as cofactor.

The protein localises to the cytoplasm. It carries out the reaction (2R,3S)-3-isopropylmalate + NAD(+) = 4-methyl-2-oxopentanoate + CO2 + NADH. It functions in the pathway amino-acid biosynthesis; L-leucine biosynthesis; L-leucine from 3-methyl-2-oxobutanoate: step 3/4. Catalyzes the oxidation of 3-carboxy-2-hydroxy-4-methylpentanoate (3-isopropylmalate) to 3-carboxy-4-methyl-2-oxopentanoate. The product decarboxylates to 4-methyl-2 oxopentanoate. In Mannheimia succiniciproducens (strain KCTC 0769BP / MBEL55E), this protein is 3-isopropylmalate dehydrogenase.